The primary structure comprises 377 residues: MYTFVVRQENSSVYAEVSRLLLATGYWKRLRRDNPRFNLMLGGRNRLPFGRLGHEPGLAQLVNYYRGADKLCRKASLVKLVKTSPELSESCSWFPESYVIHPTNLKTPVAPAQNGIQLPVSNSRTDEREFFLASYNRKKEDGEGNVWIAKSSAGAKGEGILISSEASELLDFIDNQGQVHVIQKYLEHPLLLEPGHRKFDIRSWVLVDHQYNIYLYREGVLRTASEPYHVDNFQDKTCHLTNHCIQKEYSKNYGKYEEGNEMFFEEFNQYLTSALNITLENSILLQIKHIIRSCLMSVEPAISTKHLPYQSFQLLGFDFMVDEELKVWLIEVNGAPACAQKLYAELCQGIVDIAISSVFPPPDTEQVPQQPAAFMKL.

A TTL domain is found at 3–370 (TFVVRQENSS…PPDTEQVPQQ (368 aa)).

The protein belongs to the tubulin--tyrosine ligase family. In terms of assembly, monomer. Mg(2+) is required as a cofactor. The cofactor is K(+).

It carries out the reaction C-terminal L-alpha-aminoacyl-L-glutamyl-L-glutamyl-[tubulin] + L-tyrosine + ATP = C-terminal L-alpha-aminoacyl-L-glutamyl-L-glutamyl-L-tyrosyl-[tubulin] + ADP + phosphate + H(+). Functionally, catalyzes the post-translational addition of a tyrosine to the C-terminal end of detyrosinated alpha-tubulin. The polypeptide is Tubulin--tyrosine ligase (Ttl) (Rattus norvegicus (Rat)).